A 406-amino-acid chain; its full sequence is Terminal uridylyltransferase 7 (406 aa).

A mitochondrion-targeting transit peptide spans Met1–His15. UTP contacts are provided by residues Ser54 and Ser64–Asp65. Positions 65 and 67 each coordinate Mg(2+). Residues Gly138–Ser142, Lys164, Lys168, and Asn181–Phe183 each bind UTP.

This sequence belongs to the DNA polymerase type-B-like family. Component of the mitochondrial RNA editing core complex-like (RECC-like), also known as the editosome-like complex; only a small proportion of MEAT1 associates with the complex. Interacts with RNA-editing ligase REL1. Mg(2+) is required as a cofactor.

Its subcellular location is the mitochondrion matrix. It carries out the reaction RNA(n) + UTP = RNA(n)-3'-uridine ribonucleotide + diphosphate. In terms of biological role, terminal uridylyltransferase which, as part of the mitochondrial RNA editing core-like complex (RECC-like), is involved in the post-transcriptional editing of mitochondrial RNA, a process involving the addition and deletion of uridine (U) nucleotides in the pre-mRNA. Specifically, catalyzes the addition of U to single-stranded RNA with a preference for a 3'-terminal U and adds the number of Us specified by a guide RNA (gRNA) to precleaved double-stranded RNA editing substrates. Essential for insect and bloodstream developmental forms viability. The chain is Terminal uridylyltransferase 7 from Trypanosoma brucei brucei.